The primary structure comprises 303 residues: MMSESNKQQAVNKLTEIVANFTAMISTRMPDDVVDKLKQLKDAETSSMGKIIYHTMFDNMQKAIDLNRPACQDTGEIMFFVKVGSRFPLLGELQSILKQAVEEATVKAPLRHNAVEIFDEVNTGKNTGSGVPWVTWDIVPDGDDAEIEVYMAGGGCTLPGRSKVLMPSEGYEGVVKFVFENISTLAVNACPPVLVGVGIATSVETAAVLSRKAILRPIGSRHPNPKAAELELRLEEGLNRLGIGPQGLTGNSSVMGVHIESAARHPSTIGVAVSTGCWAHRRGTLRVHADLTFENLSHTRSAL.

Cys71, Cys190, and Cys277 together coordinate iron-sulfur cluster.

This sequence belongs to the class-I fumarase family. As to quaternary structure, tetramer of two alpha and two beta subunits. Iron-sulfur cluster is required as a cofactor.

It carries out the reaction (2R,3R)-tartrate = oxaloacetate + H2O. The sequence is that of L(+)-tartrate dehydratase subunit alpha (ttdA) from Escherichia coli O6:H1 (strain CFT073 / ATCC 700928 / UPEC).